The chain runs to 274 residues: Putative pyruvate, phosphate dikinase regulatory protein 1 (274 aa).

149–156 contacts ADP; sequence GISRTSKT.

This sequence belongs to the pyruvate, phosphate/water dikinase regulatory protein family. PDRP subfamily.

It carries out the reaction N(tele)-phospho-L-histidyl/L-threonyl-[pyruvate, phosphate dikinase] + ADP = N(tele)-phospho-L-histidyl/O-phospho-L-threonyl-[pyruvate, phosphate dikinase] + AMP + H(+). The enzyme catalyses N(tele)-phospho-L-histidyl/O-phospho-L-threonyl-[pyruvate, phosphate dikinase] + phosphate + H(+) = N(tele)-phospho-L-histidyl/L-threonyl-[pyruvate, phosphate dikinase] + diphosphate. Bifunctional serine/threonine kinase and phosphorylase involved in the regulation of the pyruvate, phosphate dikinase (PPDK) by catalyzing its phosphorylation/dephosphorylation. The polypeptide is Putative pyruvate, phosphate dikinase regulatory protein 1 (Listeria monocytogenes serotype 4b (strain F2365)).